Here is a 137-residue protein sequence, read N- to C-terminus: Peptide methionine sulfoxide reductase MsrB (137 aa).

The interval 1-33 (MSNNQDRPGQITDESLRERLSPEAYAVTRRAGT) is disordered. Residues 13–135 (DESLRERLSP…NSLSLDFKAA (123 aa)) enclose the MsrB domain. 4 residues coordinate Zn(2+): Cys-52, Cys-55, Cys-101, and Cys-104. Cys-124 serves as the catalytic Nucleophile.

Belongs to the MsrB Met sulfoxide reductase family. It depends on Zn(2+) as a cofactor.

It catalyses the reaction L-methionyl-[protein] + [thioredoxin]-disulfide + H2O = L-methionyl-(R)-S-oxide-[protein] + [thioredoxin]-dithiol. This chain is Peptide methionine sulfoxide reductase MsrB, found in Thioalkalivibrio sulfidiphilus (strain HL-EbGR7).